A 301-amino-acid chain; its full sequence is Cuticle collagen 2 (301 aa).

The signal sequence occupies residues Met-1–Asn-37. Triple-helical region stretches follow at residues Gly-105–Gly-134, Gly-153–Pro-176, Gly-183–Ser-212, and Gly-215–Cys-282. Positions Pro-109–Lys-284 are disordered. Pro residues-rich tracts occupy residues Thr-143 to Asp-170 and Pro-179 to Ala-191. The segment covering Gly-201 to Gly-218 has biased composition (gly residues). Positions Glu-219–Ala-229 are enriched in pro residues. Low complexity predominate over residues Pro-252 to Asp-261. Residues Gly-262–Gly-274 show a composition bias toward gly residues.

It belongs to the cuticular collagen family. Collagen polypeptide chains are complexed within the cuticle by disulfide bonds and other types of covalent cross-links. As to expression, syncytial dorsal and ventral epidermis.

In terms of biological role, nematode cuticles are composed largely of collagen-like proteins. The cuticle functions both as an exoskeleton and as a barrier to protect the worm from its environment. In Caenorhabditis elegans, this protein is Cuticle collagen 2 (col-2).